Consider the following 871-residue polypeptide: Alanine--tRNA ligase (871 aa).

Zn(2+) contacts are provided by H561, H565, C665, and H669.

It belongs to the class-II aminoacyl-tRNA synthetase family. It depends on Zn(2+) as a cofactor.

Its subcellular location is the cytoplasm. It carries out the reaction tRNA(Ala) + L-alanine + ATP = L-alanyl-tRNA(Ala) + AMP + diphosphate. In terms of biological role, catalyzes the attachment of alanine to tRNA(Ala) in a two-step reaction: alanine is first activated by ATP to form Ala-AMP and then transferred to the acceptor end of tRNA(Ala). Also edits incorrectly charged Ser-tRNA(Ala) and Gly-tRNA(Ala) via its editing domain. This is Alanine--tRNA ligase from Dehalococcoides mccartyi (strain ATCC BAA-2266 / KCTC 15142 / 195) (Dehalococcoides ethenogenes (strain 195)).